A 129-amino-acid chain; its full sequence is Small ribosomal subunit protein uS11 (129 aa).

The protein belongs to the universal ribosomal protein uS11 family. As to quaternary structure, part of the 30S ribosomal subunit. Interacts with proteins S7 and S18. Binds to IF-3.

In terms of biological role, located on the platform of the 30S subunit, it bridges several disparate RNA helices of the 16S rRNA. Forms part of the Shine-Dalgarno cleft in the 70S ribosome. The protein is Small ribosomal subunit protein uS11 of Mannheimia succiniciproducens (strain KCTC 0769BP / MBEL55E).